A 284-amino-acid polypeptide reads, in one-letter code: Cystinosin homolog (284 aa).

7 helical membrane-spanning segments follow: residues 3–23, 37–57, 86–106, 116–136, 139–159, 181–201, and 216–236; these read ALSI…SLSF, IGLS…YSVF, IAFA…CFIY, LGIG…ILGF, VFTW…ITFI, NVLL…LDVA, and LGLS…HYIL. One can recognise a PQ-loop 1 domain in the interval 4–70; the sequence is LSIISIIIGW…LYFDKLVKNE (67 aa). A PQ-loop 2 domain is found at 154 to 208; it reads LFITFIKYIPQAYLNFKNKSTSGWSVHNVLLDFSGGVLSLLQMFLDVADSGNWNI. The disordered stretch occupies residues 247 to 269; the sequence is NLNDNNIPNNNNNNNNNINNNTP.

Belongs to the cystinosin family.

Its subcellular location is the lysosome membrane. It carries out the reaction L-cystine(out) + H(+)(out) = L-cystine(in) + H(+)(in). In terms of biological role, cystine/H(+) symporter that mediates export of cystine, the oxidized dimer of cysteine, from lysosomes. This is Cystinosin homolog (ctns) from Dictyostelium discoideum (Social amoeba).